Reading from the N-terminus, the 194-residue chain is Ribose 1,5-bisphosphate phosphokinase PhnN (194 aa).

Gly-24–Asp-31 provides a ligand contact to ATP.

Belongs to the ribose 1,5-bisphosphokinase family.

The catalysed reaction is alpha-D-ribose 1,5-bisphosphate + ATP = 5-phospho-alpha-D-ribose 1-diphosphate + ADP. It participates in metabolic intermediate biosynthesis; 5-phospho-alpha-D-ribose 1-diphosphate biosynthesis; 5-phospho-alpha-D-ribose 1-diphosphate from D-ribose 5-phosphate (route II): step 3/3. Catalyzes the phosphorylation of ribose 1,5-bisphosphate to 5-phospho-D-ribosyl alpha-1-diphosphate (PRPP). The sequence is that of Ribose 1,5-bisphosphate phosphokinase PhnN from Rhodopseudomonas palustris (strain ATCC BAA-98 / CGA009).